We begin with the raw amino-acid sequence, 166 residues long: MRRVVTLVSKEQAEVGHRFRVVEVPDECRTCRLYPVCMGRLTPGRAYKIVEVRPYMGQRCKITDGEMVPVVVEEAPMIGLVPLNKALEGVVVTFEGECAGCEGCPQQVQVGEKIKIVRVLGRAKCRGGDFAIVEFYALGPPSPSKSGGATASRDPSRAPPSRPLSK.

Residues 140 to 166 (PPSPSKSGGATASRDPSRAPPSRPLSK) form a disordered region. Residues 157–166 (RAPPSRPLSK) are compositionally biased toward pro residues.

It belongs to the UPF0179 family.

The protein is UPF0179 protein Tneu_1978 of Pyrobaculum neutrophilum (strain DSM 2338 / JCM 9278 / NBRC 100436 / V24Sta) (Thermoproteus neutrophilus).